Here is a 160-residue protein sequence, read N- to C-terminus: Cytochrome b6-f complex subunit 4 (160 aa).

3 helical membrane-spanning segments follow: residues 36–56, 95–115, and 131–151; these read LLYM…GLSV, LLGV…PFIE, and ILFL…TFPI.

This sequence belongs to the cytochrome b family. PetD subfamily. As to quaternary structure, the 4 large subunits of the cytochrome b6-f complex are cytochrome b6, subunit IV (17 kDa polypeptide, petD), cytochrome f and the Rieske protein, while the 4 small subunits are petG, petL, petM and petN. The complex functions as a dimer. Post-translationally, the N-terminus is blocked.

The protein resides in the plastid. It is found in the chloroplast thylakoid membrane. In terms of biological role, component of the cytochrome b6-f complex, which mediates electron transfer between photosystem II (PSII) and photosystem I (PSI), cyclic electron flow around PSI, and state transitions. The chain is Cytochrome b6-f complex subunit 4 from Chlamydomonas reinhardtii (Chlamydomonas smithii).